A 179-amino-acid chain; its full sequence is GTP-dependent dephospho-CoA kinase (179 aa).

Positions 50, 51, 52, 69, 71, and 126 each coordinate GTP.

Belongs to the GTP-dependent DPCK family.

It carries out the reaction 3'-dephospho-CoA + GTP = GDP + CoA + H(+). It participates in cofactor biosynthesis; coenzyme A biosynthesis. Catalyzes the GTP-dependent phosphorylation of the 3'-hydroxyl group of dephosphocoenzyme A to form coenzyme A (CoA). The polypeptide is GTP-dependent dephospho-CoA kinase (Pyrococcus horikoshii (strain ATCC 700860 / DSM 12428 / JCM 9974 / NBRC 100139 / OT-3)).